A 208-amino-acid chain; its full sequence is ATP-dependent Clp protease proteolytic subunit (208 aa).

Residue S107 is the Nucleophile of the active site. H132 is a catalytic residue.

It belongs to the peptidase S14 family. In terms of assembly, fourteen ClpP subunits assemble into 2 heptameric rings which stack back to back to give a disk-like structure with a central cavity, resembling the structure of eukaryotic proteasomes.

The protein resides in the cytoplasm. The enzyme catalyses Hydrolysis of proteins to small peptides in the presence of ATP and magnesium. alpha-casein is the usual test substrate. In the absence of ATP, only oligopeptides shorter than five residues are hydrolyzed (such as succinyl-Leu-Tyr-|-NHMec, and Leu-Tyr-Leu-|-Tyr-Trp, in which cleavage of the -Tyr-|-Leu- and -Tyr-|-Trp bonds also occurs).. Its function is as follows. Cleaves peptides in various proteins in a process that requires ATP hydrolysis. Has a chymotrypsin-like activity. Plays a major role in the degradation of misfolded proteins. The protein is ATP-dependent Clp protease proteolytic subunit of Methylorubrum extorquens (strain CM4 / NCIMB 13688) (Methylobacterium extorquens).